The chain runs to 227 residues: 7-cyano-7-deazaguanine synthase (227 aa).

An ATP-binding site is contributed by 10–20 (LSGGLDSCVAT). 4 residues coordinate Zn(2+): C193, C201, C204, and C207.

Belongs to the QueC family. Zn(2+) is required as a cofactor.

The enzyme catalyses 7-carboxy-7-deazaguanine + NH4(+) + ATP = 7-cyano-7-deazaguanine + ADP + phosphate + H2O + H(+). Its pathway is purine metabolism; 7-cyano-7-deazaguanine biosynthesis. Functionally, catalyzes the ATP-dependent conversion of 7-carboxy-7-deazaguanine (CDG) to 7-cyano-7-deazaguanine (preQ(0)). The sequence is that of 7-cyano-7-deazaguanine synthase from Methanobrevibacter smithii (strain ATCC 35061 / DSM 861 / OCM 144 / PS).